Consider the following 157-residue polypeptide: Large ribosomal subunit protein uL15 (157 aa).

Basic and acidic residues predominate over residues 1–13 (MKLNDLRDKDGAT). The interval 1-39 (MKLNDLRDKDGATHSKKRLGRGIGSGSGKTAGRGVKGQK) is disordered. Residues 21–35 (RGIGSGSGKTAGRGV) show a composition bias toward gly residues.

The protein belongs to the universal ribosomal protein uL15 family. Part of the 50S ribosomal subunit.

Binds to the 23S rRNA. In Mesorhizobium japonicum (strain LMG 29417 / CECT 9101 / MAFF 303099) (Mesorhizobium loti (strain MAFF 303099)), this protein is Large ribosomal subunit protein uL15.